Reading from the N-terminus, the 137-residue chain is Basic phospholipase A2 homolog bothropstoxin-I (137 aa).

An N-terminal signal peptide occupies residues 1–16 (MRTLWIMAVLLVGVEG). Cystine bridges form between cysteine 42–cysteine 131, cysteine 44–cysteine 60, cysteine 59–cysteine 111, cysteine 65–cysteine 137, cysteine 66–cysteine 104, cysteine 73–cysteine 97, and cysteine 91–cysteine 102. The segment at 121-133 (KKYRYHLKPFCKK) is important for membrane-damaging activities in eukaryotes and bacteria; heparin-binding.

This sequence belongs to the phospholipase A2 family. Group II subfamily. K49 sub-subfamily. As to quaternary structure, homodimer; non-covalently linked (probable alternative/compact dimer conformation in solution). Binds to heparin. As to expression, expressed by the venom gland.

It localises to the secreted. Suramin inhibits both myotoxic and muscle-paralyzing activities. Chicoric acid inhibits myotoxic activity. Zinc ions inhibits the myotoxic activity and the neuromuscular blockade. Heparin inhibits myotoxic activity. In terms of biological role, snake venom phospholipase A2 homolog that lacks enzymatic activity. Shows local myotoxic activity. Induces inflammation, since it induces edema and leukocytes infiltration. In addition, it induces NLRP3 NLRP3, ASC (PYCARD), caspase-1 (CASP1), and IL-1beta (IL1B) gene expression in the gastrocnemius muscle, showing that it is able to activate NLRP3 inflammasome. It also damages artificial and myoblast membranes by a calcium-independent mechanism, has bactericidal activity, and induces neuromuscular blockade. A model of myotoxic mechanism has been proposed: an apo Lys49-PLA2 is activated by the entrance of a hydrophobic molecule (e.g. fatty acid) at the hydrophobic channel of the protein leading to a reorientation of a monomer. This reorientation causes a transition between 'inactive' to 'active' states, causing alignment of C-terminal and membrane-docking sites (MDoS) side-by-side and putting the membrane-disruption sites (MDiS) in the same plane, exposed to solvent and in a symmetric position for both monomers. The MDoS region stabilizes the toxin on membrane by the interaction of charged residues with phospholipid head groups. Subsequently, the MDiS region destabilizes the membrane with penetration of hydrophobic residues. This insertion causes a disorganization of the membrane, allowing an uncontrolled influx of ions (i.e. calcium and sodium), and eventually triggering irreversible intracellular alterations and cell death. This is Basic phospholipase A2 homolog bothropstoxin-I from Bothrops jararacussu (Jararacussu).